Here is a 131-residue protein sequence, read N- to C-terminus: Large ribosomal subunit protein bL12 (131 aa).

It belongs to the bacterial ribosomal protein bL12 family. In terms of assembly, homodimer. Part of the ribosomal stalk of the 50S ribosomal subunit. Forms a multimeric L10(L12)X complex, where L10 forms an elongated spine to which 2 to 4 L12 dimers bind in a sequential fashion. Binds GTP-bound translation factors.

Functionally, forms part of the ribosomal stalk which helps the ribosome interact with GTP-bound translation factors. Is thus essential for accurate translation. This is Large ribosomal subunit protein bL12 from Prochlorococcus marinus (strain MIT 9312).